Here is a 353-residue protein sequence, read N- to C-terminus: Phospho-N-acetylmuramoyl-pentapeptide-transferase (353 aa).

The next 10 membrane-spanning stretches (helical) occupy residues 24 to 44 (LGFFIAFFLTLFLMPKFILWA), 66 to 86 (TPTMGGIVFVFATIVASVLCA), 88 to 108 (LSNLYVLLGIIVLVGFSFVGF), 129 to 149 (FGMLFILSLIVSVLLSLKGLD), 160 to 180 (PLFEMPTMLAVGFWVLVFLST), 192 to 212 (GLASVPSIFTLLSLSIFVYVA), 229 to 249 (VGELFVISLALVGSLFGFLWY), 256 to 276 (VFMGDSGSLAIGGFIAYNAIV), 281 to 301 (ILLVLMGSIFVIETLSVILQV), and 330 to 350 (KVIVRFWIISMLSNLVALLSL).

Belongs to the glycosyltransferase 4 family. MraY subfamily. Mg(2+) serves as cofactor.

It is found in the cell inner membrane. The catalysed reaction is UDP-N-acetyl-alpha-D-muramoyl-L-alanyl-gamma-D-glutamyl-meso-2,6-diaminopimeloyl-D-alanyl-D-alanine + di-trans,octa-cis-undecaprenyl phosphate = di-trans,octa-cis-undecaprenyl diphospho-N-acetyl-alpha-D-muramoyl-L-alanyl-D-glutamyl-meso-2,6-diaminopimeloyl-D-alanyl-D-alanine + UMP. It participates in cell wall biogenesis; peptidoglycan biosynthesis. Its function is as follows. Catalyzes the initial step of the lipid cycle reactions in the biosynthesis of the cell wall peptidoglycan: transfers peptidoglycan precursor phospho-MurNAc-pentapeptide from UDP-MurNAc-pentapeptide onto the lipid carrier undecaprenyl phosphate, yielding undecaprenyl-pyrophosphoryl-MurNAc-pentapeptide, known as lipid I. The chain is Phospho-N-acetylmuramoyl-pentapeptide-transferase from Helicobacter pylori (strain J99 / ATCC 700824) (Campylobacter pylori J99).